The chain runs to 90 residues: MKRVLIKLTGKVQGVGCRRTTLAKARVLGVTGYVTNCVDGSVEVLAQGSHVAVDNLIAWCQAGVPCTVGLRVDVEEYQGDDIYLDFSIVR.

Residues 3-90 (RVLIKLTGKV…DIYLDFSIVR (88 aa)) enclose the Acylphosphatase-like domain. Catalysis depends on residues Arg18 and Asn36.

This sequence belongs to the acylphosphatase family.

The catalysed reaction is an acyl phosphate + H2O = a carboxylate + phosphate + H(+). This Shewanella oneidensis (strain ATCC 700550 / JCM 31522 / CIP 106686 / LMG 19005 / NCIMB 14063 / MR-1) protein is Acylphosphatase (acyP).